A 344-amino-acid chain; its full sequence is Glyceraldehyde-3-phosphate dehydrogenase (344 aa).

Residues 11–12 and Gly110 each bind NAD(+); that span reads TI. 139–141 contacts D-glyceraldehyde 3-phosphate; the sequence is SCN. Cys140 acts as the Nucleophile in catalysis. NAD(+) is bound at residue Arg169. D-glyceraldehyde 3-phosphate is bound at residue 195 to 196; that stretch reads HG. Position 302 (Gln302) interacts with NAD(+).

The protein belongs to the glyceraldehyde-3-phosphate dehydrogenase family. Homotetramer.

The protein localises to the cytoplasm. The catalysed reaction is D-glyceraldehyde 3-phosphate + phosphate + NADP(+) = (2R)-3-phospho-glyceroyl phosphate + NADPH + H(+). The enzyme catalyses D-glyceraldehyde 3-phosphate + phosphate + NAD(+) = (2R)-3-phospho-glyceroyl phosphate + NADH + H(+). It functions in the pathway carbohydrate degradation; glycolysis; pyruvate from D-glyceraldehyde 3-phosphate: step 1/5. The chain is Glyceraldehyde-3-phosphate dehydrogenase from Pyrobaculum islandicum (strain DSM 4184 / JCM 9189 / GEO3).